The chain runs to 167 residues: Chorion class CB protein PC404 (167 aa).

Residues 1-55 (IGREAIVGAGLQGPFGGPWPYDALSPFDMPYGPALPAMSCGAGSFGPSSGFAPAA) are left arm. Positions 56–126 (AYGGGLAVTS…GDGAVGIVAE (71 aa)) are central domain. The segment at 127-167 (TPFASTSVNPAYGYGGAIGGGVPYNSYGPIGYGGCGYNALY) is right arm.

Belongs to the chorion protein family.

Its function is as follows. This protein is one of many from the eggshell of the silk moth. The protein is Chorion class CB protein PC404 of Antheraea polyphemus (Polyphemus moth).